A 70-amino-acid polypeptide reads, in one-letter code: Flexible pilin (70 aa).

The first 24 residues, M1 to A24, serve as a signal peptide directing secretion.

In terms of assembly, homomer.

Its subcellular location is the fimbrium. Its function is as follows. Fimbriae (also called pili) are polar filaments radiating from the surface of the bacterium to a length of 0.5-1.5 micrometers and numbering 100-300 per cell. They enable bacteria to colonize the epithelium of specific host organs. Flexible pili possess hemagglutinating function. The sequence is that of Flexible pilin (aerA) from Aeromonas hydrophila.